The following is a 128-amino-acid chain: Large ribosomal subunit protein bL19 (128 aa).

This sequence belongs to the bacterial ribosomal protein bL19 family.

Functionally, this protein is located at the 30S-50S ribosomal subunit interface and may play a role in the structure and function of the aminoacyl-tRNA binding site. The chain is Large ribosomal subunit protein bL19 from Herminiimonas arsenicoxydans.